The following is a 678-amino-acid chain: Endoplasmic reticulum membrane-associated RNA degradation protein (678 aa).

The next 2 membrane-spanning stretches (helical) occupy residues 390 to 410 and 587 to 607; these read LLAF…LSVF and VLSL…AVCG.

The protein localises to the endoplasmic reticulum membrane. Its function is as follows. May play a role in neuronal migration during embryonic development. This Homo sapiens (Human) protein is Endoplasmic reticulum membrane-associated RNA degradation protein (ERMARD).